Here is a 697-residue protein sequence, read N- to C-terminus: MFS antiporter QDR3 (697 aa).

The Cytoplasmic portion of the chain corresponds to 1–141 (MSHSPNLSPQ…ARDYPNKIKY (141 aa)). Residues 38–109 (HPIGHHGREQ…KPTSTSIKTN (72 aa)) are disordered. Composition is skewed to low complexity over residues 53–69 (NTTK…HTTT) and 85–99 (DLSS…YLSQ). A helical transmembrane segment spans residues 142-162 (LIVFIIAFASLAGPFGTSVML). The Extracellular segment spans residues 163 to 180 (PAIDDIVNDLNTNVSTVN). Asn175 and Asn180 each carry an N-linked (GlcNAc...) asparagine glycan. The helical transmembrane segment at 181 to 201 (VSVGIYLLSLGIFPLWWSSFS) threads the bilayer. Over 202–215 (ERFGRRSVYMVSFT) the chain is Cytoplasmic. Residues 216-236 (LFVAFSIGTALSPNIAALIVL) form a helical membrane-spanning segment. Residues 237–240 (RVLQ) are Extracellular-facing. The helical transmembrane segment at 241–261 (GGSSASVQAVGAGTIADLFIP) threads the bilayer. The Cytoplasmic portion of the chain corresponds to 262–268 (QERGQAM). The chain crosses the membrane as a helical span at residues 269-289 (GLYYLGPLAGPFLAPILGGAV). The Extracellular portion of the chain corresponds to 290–296 (SQAWGWR). Residues 297 to 317 (ATQWLLMIISACSFVLITFFL) form a helical membrane-spanning segment. Topologically, residues 318 to 485 (PETLRRVDTI…SIILLKHPPV (168 aa)) are cytoplasmic. The disordered stretch occupies residues 338–367 (DNNGSQNEKIHDDFAGADNSSVHDIDGNPI). The chain crosses the membrane as a helical span at residues 486–506 (VLVISFSAISFAAIYFFNMAI). The Extracellular segment spans residues 507 to 519 (SYEYARSPYNFSS). The N-linked (GlcNAc...) asparagine glycan is linked to Asn516. Residues 520–540 (VILGLMYIPNSVTYFMASIIG) form a helical membrane-spanning segment. The Cytoplasmic segment spans residues 541 to 565 (GKWNDRLLNRYAQKHGELVPESRLS). Residues 566-586 (WNIVVAIILYPMACLIFGWTI) form a helical membrane-spanning segment. Residues 587-590 (KYRE) are Extracellular-facing. Residues 591-611 (FWVIPLIGTALFGFASMLVIG) form a helical membrane-spanning segment. The Cytoplasmic segment spans residues 612–626 (ATVTYLVDSLPGKGA). Residues 627–647 (TGVALNNLIRQILAAIATFIV) form a helical membrane-spanning segment. Residues 648–653 (EPLLRA) are Extracellular-facing. Residues 654–674 (IGAGVLFSIIAGILLVSSLVL) traverse the membrane as a helical segment. At 675–697 (LYLKKRGAFFREHYDVMDLYAKL) the chain is on the cytoplasmic side.

This sequence belongs to the major facilitator superfamily. CAR1 family.

Its subcellular location is the cell membrane. MFS antiporter that does not display functional linkage as drug transporter and performs functions that significantly affect biofilm development and virulence. No substrate for transport has been identified yet, but plays an important role in the growth in the host. This Candida albicans (strain SC5314 / ATCC MYA-2876) (Yeast) protein is MFS antiporter QDR3 (QDR3).